Here is a 381-residue protein sequence, read N- to C-terminus: MSRLQFQLQTTDGHARRGRLTFPRGTVETPAFMPVGTYGSVKGILPEQIRALGAEIILGNTFHLYLRPGLDVIGDHGGLHGFARWDGPILTDSGGFQVFSLAHRRKITEQGVTFSSPNDGARVFLGPEESMQIQKVLDSDIVMIFDECTPYPATEDVARRSMELSLRWAQRSRQAHDGLGNDAALFGIVQGGVHPDLRSRSLDGLQAIGFDGYAIGGLAVGEPEHERNAMLEHLHPRLPAERPRYLMGVGRPEDLVEGVARGVDMFDCVMPTRNARNGHYFTSFGTVRIRNAKYERDLDTIEPGCGCHACSSGYTRAYLRHLDRCNEMLAPMLGTLHNLWYYEKLMADMRAAIAAGTFVEFRRSFYAARGATTPPLPGESS.

The active-site Proton acceptor is the aspartate 92. Substrate is bound by residues 92-96, aspartate 146, glutamine 190, and glycine 217; that span reads DSGGF. The tract at residues 248–254 is RNA binding; it reads GVGRPED. Aspartate 267 serves as the catalytic Nucleophile. The interval 272-276 is RNA binding; important for wobble base 34 recognition; the sequence is TRNAR. Residues cysteine 305, cysteine 307, cysteine 310, and histidine 337 each contribute to the Zn(2+) site.

Belongs to the queuine tRNA-ribosyltransferase family. Homodimer. Within each dimer, one monomer is responsible for RNA recognition and catalysis, while the other monomer binds to the replacement base PreQ1. The cofactor is Zn(2+).

It catalyses the reaction 7-aminomethyl-7-carbaguanine + guanosine(34) in tRNA = 7-aminomethyl-7-carbaguanosine(34) in tRNA + guanine. The protein operates within tRNA modification; tRNA-queuosine biosynthesis. Functionally, catalyzes the base-exchange of a guanine (G) residue with the queuine precursor 7-aminomethyl-7-deazaguanine (PreQ1) at position 34 (anticodon wobble position) in tRNAs with GU(N) anticodons (tRNA-Asp, -Asn, -His and -Tyr). Catalysis occurs through a double-displacement mechanism. The nucleophile active site attacks the C1' of nucleotide 34 to detach the guanine base from the RNA, forming a covalent enzyme-RNA intermediate. The proton acceptor active site deprotonates the incoming PreQ1, allowing a nucleophilic attack on the C1' of the ribose to form the product. After dissociation, two additional enzymatic reactions on the tRNA convert PreQ1 to queuine (Q), resulting in the hypermodified nucleoside queuosine (7-(((4,5-cis-dihydroxy-2-cyclopenten-1-yl)amino)methyl)-7-deazaguanosine). This Xanthomonas campestris pv. campestris (strain 8004) protein is Queuine tRNA-ribosyltransferase.